The sequence spans 637 residues: Sec1 family domain-containing protein 1 (637 aa).

3 positions are modified to phosphoserine: serine 32, serine 298, and serine 523.

The protein belongs to the STXBP/unc-18/SEC1 family. Interacts with STX17. Interacts with the COG complex via COG4. Interacts with STX5A. As to expression, highly expressed in testis. Detected at lower levels in brain, astrocytes, heart and small intestine.

The protein resides in the cytoplasm. The protein localises to the endoplasmic reticulum membrane. It localises to the golgi apparatus. It is found in the golgi stack membrane. In terms of biological role, plays a role in SNARE-pin assembly and Golgi-to-ER retrograde transport via its interaction with COG4. Involved in vesicular transport between the endoplasmic reticulum and the Golgi. The polypeptide is Sec1 family domain-containing protein 1 (Scfd1) (Rattus norvegicus (Rat)).